The following is a 491-amino-acid chain: MKIMSKLNDQQQFRRDKLKNLVKNGFNFPSSTFEHDNLVEINEKFSQKSKEFFLENQVKIAFAGRLIRQRGPFFIIFSQNLQIQAYISKKFQKKNEFIFANLDLGDIIEVSGYLFKTQTGQLSIKVNNFSLLTKSLHPLPDQYYGIENPDEKYRKRYLDLLVNSESAKTFRLRSKIISLIRTFFDSQGFLEVDTPVLHPVLGGASAKPFITYYNSLSQNFYLRIATELPLKKLLVAGFDRVYEIGKIFRNEGFDSTHNPEFTSIEFYQAYANLEKIMDQTENLFRFLFEKLNLDPANFDFSNKKINFLEKFARYDMIEITSKLMNFDLKSANFADLVEKAKKEGVKIEPFFKKGHLINKFFEKFVEPTLINPTFIIGHPIEISPLAKSNPNNPNFTLRAELFICGKEFANMFDELNDPIDQLSRFQAQIIEKNQGNQEASEIDNEFVQALEYGMPPAGGCGIGIDRLTMLLTKNESIREVILFPQLKPKKD.

Residues glutamate 400 and glutamate 407 each coordinate Mg(2+).

It belongs to the class-II aminoacyl-tRNA synthetase family. Homodimer. Requires Mg(2+) as cofactor.

Its subcellular location is the cytoplasm. The enzyme catalyses tRNA(Lys) + L-lysine + ATP = L-lysyl-tRNA(Lys) + AMP + diphosphate. The protein is Lysine--tRNA ligase of Mesomycoplasma hyopneumoniae (strain 7448) (Mycoplasma hyopneumoniae).